A 675-amino-acid chain; its full sequence is L-type lectin-domain containing receptor kinase IX.2 (675 aa).

The N-terminal stretch at 1 to 35 is a signal peptide; it reads MLYFIFCQNLSSSSSMSNSILFLSLFLFLPFVVDS. N-linked (GlcNAc...) asparagine glycans are attached at residues N9, N39, N110, N146, N179, N186, N191, and N212. The segment at 36–269 is legume-lectin like; that stretch reads LYFNFTSFRQ…EEHRLLSWEL (234 aa). Topologically, residues 36–281 are extracellular; sequence LYFNFTSFRQ…SLDSDKADSR (246 aa). Residues 282-302 form a helical membrane-spanning segment; it reads IGLVIGISASGFVFLTFMVIT. The Cytoplasmic segment spans residues 303-675; sequence TVVVWSRKQR…VTFSGIEYGR (373 aa). Residues 350 to 631 enclose the Protein kinase domain; the sequence is FSSHRKLGEG…KQGIQVMNFE (282 aa). ATP is bound by residues 356 to 364 and K379; that span reads LGEGGFGAV. D475 functions as the Proton acceptor in the catalytic mechanism.

In the C-terminal section; belongs to the protein kinase superfamily. Ser/Thr protein kinase family. The protein in the N-terminal section; belongs to the leguminous lectin family. Interacts with ABCG40.

It is found in the cell membrane. It catalyses the reaction L-seryl-[protein] + ATP = O-phospho-L-seryl-[protein] + ADP + H(+). The catalysed reaction is L-threonyl-[protein] + ATP = O-phospho-L-threonyl-[protein] + ADP + H(+). Promotes hydrogen peroxide H(2)O(2) production and cell death. In terms of biological role, involved in resistance response to the pathogenic oomycetes Phytophthora infestans and Phytophthora capsici. The chain is L-type lectin-domain containing receptor kinase IX.2 from Arabidopsis thaliana (Mouse-ear cress).